The sequence spans 394 residues: Phosphoglycerate kinase (394 aa).

Substrate is bound by residues 21 to 23, Arg-36, 59 to 62, Arg-118, and Arg-151; these read DFN and HLGR. A Phosphoserine modification is found at Ser-183. 2 residues coordinate ATP: Lys-201 and Gly-292. At Thr-299 the chain carries Phosphothreonine. Residues Glu-323 and 350 to 353 contribute to the ATP site; that span reads GGDS.

Belongs to the phosphoglycerate kinase family. In terms of assembly, monomer.

The protein localises to the cytoplasm. It catalyses the reaction (2R)-3-phosphoglycerate + ATP = (2R)-3-phospho-glyceroyl phosphate + ADP. It functions in the pathway carbohydrate degradation; glycolysis; pyruvate from D-glyceraldehyde 3-phosphate: step 2/5. In Bacillus cereus (strain G9842), this protein is Phosphoglycerate kinase.